Consider the following 377-residue polypeptide: Pseudouridylate synthase RPUSD4, mitochondrial (377 aa).

The N-terminal 15 residues, 1-15 (MAAPRWSASGPWIRG), are a transit peptide targeting the mitochondrion. Positions 36-62 (AASTAINAQRLAEKLRAQKREQDTKKE) form a coiled coil. Residue D153 is part of the active site.

This sequence belongs to the pseudouridine synthase RluA family. Interacts with 16S mt-rRNA, mt-tRNA(Phe) and mt-tRNA(Met). Forms a regulatory protein-RNA complex, consisting of RCC1L, NGRN, RPUSD3, RPUSD4, TRUB2, FASTKD2 and 16S mt-rRNA.

Its subcellular location is the mitochondrion matrix. It is found in the nucleus. The protein resides in the cytoplasm. It catalyses the reaction uridine in 5S rRNA = pseudouridine in 5S rRNA. The enzyme catalyses a uridine in tRNA = a pseudouridine in tRNA. It carries out the reaction a uridine in mRNA = a pseudouridine in mRNA. In terms of biological role, catalyzes uridine to pseudouridine isomerization (pseudouridylation) of different mitochondrial RNA substrates. Acts on position 1397 in 16S mitochondrial ribosomal RNA (16S mt-rRNA). This modification is required for the assembly of 16S mt-rRNA into a functional mitochondrial ribosome. As a component of a functional protein-RNA module, consisting of RCC1L, NGRN, RPUSD3, RPUSD4, TRUB2, FASTKD2 and 16S mt-rRNA, controls 16S mt-rRNA abundance and is required for intra-mitochondrial translation. Acts on position 39 in mitochondrial tRNA(Phe). Also catalyzes pseudouridylation of mRNAs in nucleus: acts as a regulator of pre-mRNA splicing by mediating pseudouridylation of pre-mRNAs at locations associated with alternatively spliced regions. Pseudouridylation of pre-mRNAs near splice sites directly regulates mRNA splicing and mRNA 3'-end processing. The sequence is that of Pseudouridylate synthase RPUSD4, mitochondrial from Homo sapiens (Human).